Here is a 415-residue protein sequence, read N- to C-terminus: Succinate--CoA ligase [GDP-forming] subunit beta, mitochondrial (415 aa).

The transit peptide at M1–F19 directs the protein to the mitochondrion. The 231-residue stretch at K28 to F258 folds into the ATP-grasp domain. Residues Q39, G72–G74, and V130 contribute to the GTP site. Mg(2+)-binding residues include N227 and D241. Substrate contacts are provided by residues N292 and G349–V351.

The protein belongs to the succinate/malate CoA ligase beta subunit family. GTP-specific subunit beta subfamily. As to quaternary structure, heterodimer of an alpha and a beta subunit. The beta subunit determines specificity for GTP. The cofactor is Mg(2+).

It localises to the mitochondrion. It carries out the reaction GTP + succinate + CoA = succinyl-CoA + GDP + phosphate. It participates in carbohydrate metabolism; tricarboxylic acid cycle; succinate from succinyl-CoA (ligase route): step 1/1. GTP-specific succinyl-CoA synthetase functions in the citric acid cycle (TCA), coupling the hydrolysis of succinyl-CoA to the synthesis of GTP and thus represents the only step of substrate-level phosphorylation in the TCA. The beta subunit provides nucleotide specificity of the enzyme and binds the substrate succinate, while the binding sites for coenzyme A and phosphate are found in the alpha subunit. The protein is Succinate--CoA ligase [GDP-forming] subunit beta, mitochondrial of Caenorhabditis elegans.